A 167-amino-acid chain; its full sequence is Small ribosomal subunit protein uS5 (167 aa).

The S5 DRBM domain occupies 12–75; that stretch reads LREKLITINR…ERARGGMRTV (64 aa).

Belongs to the universal ribosomal protein uS5 family. As to quaternary structure, part of the 30S ribosomal subunit. Contacts proteins S4 and S8.

Functionally, with S4 and S12 plays an important role in translational accuracy. Its function is as follows. Located at the back of the 30S subunit body where it stabilizes the conformation of the head with respect to the body. This Halorhodospira halophila (strain DSM 244 / SL1) (Ectothiorhodospira halophila (strain DSM 244 / SL1)) protein is Small ribosomal subunit protein uS5.